A 940-amino-acid chain; its full sequence is UvrABC system protein A (940 aa).

33-40 (GVSGSGKS) is a binding site for ATP. The segment at 252-279 (CPVCGFTVPELEPRLFSFNAPFGSCPDC) adopts a C4-type zinc-finger fold. ABC transporter domains are found at residues 309-586 (WYGK…KKSL) and 606-935 (IDKK…QYLK). 639–646 (GVSGSGKS) is an ATP binding site. The C4-type zinc-finger motif lies at 738-764 (CEACSGDGIIKIEMHFLPDVYVPCEVC).

Belongs to the ABC transporter superfamily. UvrA family. Forms a heterotetramer with UvrB during the search for lesions.

It is found in the cytoplasm. Its function is as follows. The UvrABC repair system catalyzes the recognition and processing of DNA lesions. UvrA is an ATPase and a DNA-binding protein. A damage recognition complex composed of 2 UvrA and 2 UvrB subunits scans DNA for abnormalities. When the presence of a lesion has been verified by UvrB, the UvrA molecules dissociate. In Lactococcus lactis subsp. lactis (strain IL1403) (Streptococcus lactis), this protein is UvrABC system protein A.